We begin with the raw amino-acid sequence, 224 residues long: Respiratory supercomplex factor 2, mitochondrial (224 aa).

Residues 1 to 13 (MKILTQDEIEAHR) are Mitochondrial intermembrane-facing. The chain crosses the membrane as a helical span at residues 14-38 (SHTLKGGIEGALAGFAISAIIFKVL). Topologically, residues 39–47 (PRRYPKFKP) are mitochondrial matrix. A helical transmembrane segment spans residues 48 to 75 (STLTWSIKTALWITPPTVLTAICAEEAS). Residues 76-103 (NNFDATMYGSGSSSEDALDEHRRWKSLS) lie on the Mitochondrial intermembrane side of the membrane. Residues 89 to 180 (SEDALDEHRR…YENKLHPNKQ (92 aa)) form the HIG1 domain. The chain crosses the membrane as a helical span at residues 104–133 (TKDKFVEGLSNNKYKIITGAWAASLYGSWV). The Mitochondrial matrix segment spans residues 134 to 142 (IVNKDPIMT). The chain crosses the membrane as a helical span at residues 143-173 (KAQKIVQARMYAQFITVGLLLASVGLSMYEN). Over 174–184 (KLHPNKQKVNE) the chain is Mitochondrial intermembrane. The chain crosses the membrane as a helical span at residues 185 to 204 (MRRWENALRVAEEEERLEKE). Topologically, residues 205–224 (GRRTGYVSNEERINSKIFKS) are mitochondrial matrix.

Associates with a subpopulation of the cytochrome bc1-cytochrome c oxidase supercomplexes. Associates in substoichiometric amounts with complex IV. Interacts with COX3.

Its subcellular location is the mitochondrion membrane. In terms of biological role, assembly factor that plays a role in the assembly of the respiratory chain supercomplexes (SCs) composed of ubiquinol-cytochrome c oxidoreductase (cytochrome b-c1 complex, complex III, CIII) and cytochrome c oxidase (complex IV, CIV). May be required for late-stage assembly of the COX12 and COX13 subunits. Required for the generation and maintenance of a normal proton motive force (PMF) across the inner mitochondrial membrane (IMM) by preventing proton leakage through an inactive population of CIV that accumulates when RCF1 and/or RCF2 proteins are absent. The chain is Respiratory supercomplex factor 2, mitochondrial (RCF2) from Saccharomyces cerevisiae (strain ATCC 204508 / S288c) (Baker's yeast).